The following is a 228-amino-acid chain: Claudin-10 (228 aa).

Residues 1–21 form a helical membrane-spanning segment; sequence MASTASEIIAFMVSISGWVLV. Residues 22–80 are Extracellular-facing; the sequence is SSTLPTDYWKVSTIDGTVITTATYWANLWKACVTDSTGVSNCKDFPSMLALDGYIQACR. A helical membrane pass occupies residues 81–101; that stretch reads GLMIAAVSLGFFGSIFALFGM. The Cytoplasmic portion of the chain corresponds to 102 to 115; it reads KCTKVGGSDKAKAK. Residues 116-136 form a helical membrane-spanning segment; it reads IACLAGIVFILSGLCSMTGCS. Residues 137 to 160 are Extracellular-facing; the sequence is LYANKITTEFFDPLFVEQKYELGA. A helical transmembrane segment spans residues 161 to 181; it reads ALFIGWAGASLCIIGGVIFCF. Topologically, residues 182–228 are cytoplasmic; sequence SISDNNKTPRYTYNGATSVMSSRTKYHGGEDFKTTNPSKQFDKNAYV.

The protein belongs to the claudin family. As to quaternary structure, can form homodimers both in trans (interaction between CLDN10 molecules in opposing membranes) and in cis (interaction between CLDN10 molecules within one membrane). In terms of assembly, interacts with CLDN19. Expressed in the kidney, eccrine sweat glands and in all layers of the epidermis. In the kidney, it is detected in the thick ascending limb of Henle's loop (TAL). In the sweat glands, it is expressed in cells from secretory portions, corresponding to the clear cells.

It is found in the cell junction. The protein localises to the tight junction. The protein resides in the cell membrane. The catalysed reaction is Na(+)(in) = Na(+)(out). The enzyme catalyses Li(+)(in) = Li(+)(out). It carries out the reaction K(+)(in) = K(+)(out). It catalyses the reaction Rb(+)(in) = Rb(+)(out). The catalysed reaction is Cs(+)(in) = Cs(+)(out). The enzyme catalyses NH4(+)(in) = NH4(+)(out). It carries out the reaction methylamine(out) = methylamine(in). It catalyses the reaction Mg(2+)(in) = Mg(2+)(out). The catalysed reaction is Ca(2+)(in) = Ca(2+)(out). The enzyme catalyses Sr(2+)(in) = Sr(2+)(out). It carries out the reaction chloride(in) = chloride(out). It catalyses the reaction nitrate(in) = nitrate(out). Functionally, forms paracellular channels: polymerizes in tight junction strands with cation- and anion-selective channels through the strands, conveying epithelial permeability in a process known as paracellular tight junction permeability. In terms of biological role, forms cation-selective paracellular channels. In sweat glands and in the thick ascending limb (TAL) of Henle's loop in kidney, it controls paracellular sodium permeability which is essential for proper sweat production and renal function. Forms anion-selective paracellular channels. In renal proximal tubules, it conveys selective chloride over hydrogencarbonate anion permeability which is required for renal chloride reabsorption and salt homeostasis. The sequence is that of Claudin-10 from Homo sapiens (Human).